The following is a 153-amino-acid chain: MTETSEAVEIAVGTPAAKHSESFVFERSIQTVGRRKEAVVRVRLVLGTGKFDLNGRSLEDYFPNKVHQQLIKAPLVTVERTRNFDIFALLHGGGPSGQAGALRLGIARALILASPEDRPALKKAGFLTRDPRSTERKKYGLKKARKAPQYSKR.

The tract at residues 122-153 (KKAGFLTRDPRSTERKKYGLKKARKAPQYSKR) is disordered. Basic and acidic residues predominate over residues 129-138 (RDPRSTERKK). Residues 139–153 (YGLKKARKAPQYSKR) show a composition bias toward basic residues.

The protein belongs to the universal ribosomal protein uS9 family.

This chain is Small ribosomal subunit protein uS9 (rpsI), found in Mycobacterium leprae (strain TN).